A 450-amino-acid chain; its full sequence is Phosphoglucosamine mutase (450 aa).

Serine 103 acts as the Phosphoserine intermediate in catalysis. The Mg(2+) site is built by serine 103, aspartate 243, aspartate 245, and aspartate 247. Serine 103 is subject to Phosphoserine.

Belongs to the phosphohexose mutase family. It depends on Mg(2+) as a cofactor. In terms of processing, activated by phosphorylation.

It catalyses the reaction alpha-D-glucosamine 1-phosphate = D-glucosamine 6-phosphate. Catalyzes the conversion of glucosamine-6-phosphate to glucosamine-1-phosphate. This Lactobacillus helveticus (strain DPC 4571) protein is Phosphoglucosamine mutase.